Consider the following 292-residue polypeptide: Glycine--tRNA ligase alpha subunit (292 aa).

Belongs to the class-II aminoacyl-tRNA synthetase family. Tetramer of two alpha and two beta subunits.

The protein localises to the cytoplasm. The catalysed reaction is tRNA(Gly) + glycine + ATP = glycyl-tRNA(Gly) + AMP + diphosphate. In Pelobacter propionicus (strain DSM 2379 / NBRC 103807 / OttBd1), this protein is Glycine--tRNA ligase alpha subunit.